Reading from the N-terminus, the 276-residue chain is N-acyl homoserine lactonase AiiB (276 aa).

6 residues coordinate Zn(2+): histidine 111, histidine 113, histidine 116, histidine 191, aspartate 213, and histidine 259.

It belongs to the metallo-beta-lactamase superfamily. Requires Zn(2+) as cofactor.

The enzyme catalyses an N-acyl-L-homoserine lactone + H2O = an N-acyl-L-homoserine + H(+). In Rhizobium rhizogenes (strain K84 / ATCC BAA-868) (Agrobacterium radiobacter), this protein is N-acyl homoserine lactonase AiiB.